The primary structure comprises 270 residues: Outer membrane protein P.IIC (270 aa).

Positions 1–25 (MQPAKNLLFSSLLFSSLLFSSAARA) are cleaved as a signal peptide. The Extracellular segment spans residues 26–35 (ASEDGGRGPY). The beta stranded transmembrane segment at 36-44 (VQADLAYAA) threads the bilayer. Residues 45-76 (ERITHDYPKPTGTGKNKISTVSDYFRNIRTHS) are Periplasmic-facing. The chain crosses the membrane as a beta stranded span at residues 77–85 (VHPRVSVGY). Over 86–89 (DFGS) the chain is Extracellular. A beta stranded membrane pass occupies residues 90 to 96 (WRIAADY). Topologically, residues 97-142 (ARYRKWNNNKYSVSIKELLRNDNSASGVRGHLNIQTQKTEHQENGT) are periplasmic. The chain crosses the membrane as a beta stranded span at residues 143-157 (FHAVSSLGLSTIYDF). The Extracellular portion of the chain corresponds to 158-162 (DTGSR). A beta stranded transmembrane segment spans residues 163 to 173 (FKPYIGMRVAY). Over 174 to 221 (GHVRHQVRSVEQETEIITTYPSNGGGKVSLSSKMPPKSAHHQSNSIRR) the chain is Periplasmic. The interval 194–217 (PSNGGGKVSLSSKMPPKSAHHQSN) is disordered. A beta stranded transmembrane segment spans residues 222-234 (VGLGVIAGVGFDI). The Extracellular segment spans residues 235–237 (TPN). Residues 238–246 (LTLDTGYRY) traverse the membrane as a beta stranded segment. The Periplasmic segment spans residues 247 to 261 (HNWGRLENTRFKTHE). Residues 262-270 (ASLGMRYRF) form a beta stranded membrane-spanning segment.

The protein belongs to the opacity porin family. As to quaternary structure, homotrimer.

The protein resides in the cell outer membrane. Functionally, this protein serves as a porin. This Neisseria gonorrhoeae protein is Outer membrane protein P.IIC (piiC).